The following is a 362-amino-acid chain: E3 ubiquitin-protein ligase TM129 (362 aa).

Residues 1–6 (MDSPEV) lie on the Lumenal side of the membrane. A helical transmembrane segment spans residues 7-27 (TFTLAYLVFAVCFVFTPTEFH). The Cytoplasmic portion of the chain corresponds to 28–56 (SAGLTVQNLLSGWLGSEDAAFVPYHLRRT). The chain crosses the membrane as a helical span at residues 57 to 77 (AATLLCHSLLPLGYYVGMCFA). The Lumenal segment spans residues 78 to 94 (ASEKQLYYPSQTPETWR). A helical membrane pass occupies residues 95–115 (AFLLLALMLPAIACTLIYYWS). The Cytoplasmic segment spans residues 116–362 (RDHWACHPLA…FCVLDVCAVR (247 aa)). The RING-type; degenerate zinc finger occupies 285 to 350 (CIGCMQTQAS…ASRVPCPTCR (66 aa)).

The protein belongs to the TMEM129 family. As to quaternary structure, integral component of ER-resident dislocation complexes.

The protein resides in the endoplasmic reticulum membrane. It carries out the reaction S-ubiquitinyl-[E2 ubiquitin-conjugating enzyme]-L-cysteine + [acceptor protein]-L-lysine = [E2 ubiquitin-conjugating enzyme]-L-cysteine + N(6)-ubiquitinyl-[acceptor protein]-L-lysine.. It participates in protein modification; protein ubiquitination. Its function is as follows. E3 ubiquitin-protein ligase involved in ER-associated protein degradation, preferentially associates with the E2 enzyme UBE2J2. Exploited by viral US11 proteins to mediate HLA class I proteins degradation. The polypeptide is E3 ubiquitin-protein ligase TM129 (TMEM129) (Bos taurus (Bovine)).